The chain runs to 141 residues: Large ribosomal subunit protein uL11 (141 aa).

This sequence belongs to the universal ribosomal protein uL11 family. In terms of assembly, part of the ribosomal stalk of the 50S ribosomal subunit. Interacts with L10 and the large rRNA to form the base of the stalk. L10 forms an elongated spine to which L12 dimers bind in a sequential fashion forming a multimeric L10(L12)X complex. Post-translationally, one or more lysine residues are methylated.

Forms part of the ribosomal stalk which helps the ribosome interact with GTP-bound translation factors. The chain is Large ribosomal subunit protein uL11 from Microcystis aeruginosa (strain NIES-843 / IAM M-2473).